The sequence spans 204 residues: Leucyl/phenylalanyl-tRNA--protein transferase (204 aa).

It belongs to the L/F-transferase family.

Its subcellular location is the cytoplasm. The enzyme catalyses N-terminal L-lysyl-[protein] + L-leucyl-tRNA(Leu) = N-terminal L-leucyl-L-lysyl-[protein] + tRNA(Leu) + H(+). The catalysed reaction is N-terminal L-arginyl-[protein] + L-leucyl-tRNA(Leu) = N-terminal L-leucyl-L-arginyl-[protein] + tRNA(Leu) + H(+). It carries out the reaction L-phenylalanyl-tRNA(Phe) + an N-terminal L-alpha-aminoacyl-[protein] = an N-terminal L-phenylalanyl-L-alpha-aminoacyl-[protein] + tRNA(Phe). Functionally, functions in the N-end rule pathway of protein degradation where it conjugates Leu, Phe and, less efficiently, Met from aminoacyl-tRNAs to the N-termini of proteins containing an N-terminal arginine or lysine. The chain is Leucyl/phenylalanyl-tRNA--protein transferase from Rhizobium leguminosarum bv. trifolii (strain WSM2304).